A 64-amino-acid chain; its full sequence is Large ribosomal subunit protein uL30 (64 aa).

This sequence belongs to the universal ribosomal protein uL30 family. In terms of assembly, part of the 50S ribosomal subunit.

The chain is Large ribosomal subunit protein uL30 from Bdellovibrio bacteriovorus (strain ATCC 15356 / DSM 50701 / NCIMB 9529 / HD100).